We begin with the raw amino-acid sequence, 882 residues long: Translation initiation factor IF-2 (882 aa).

The interval 57-211 (YIPANKTKDK…KDKSKPKVAT (155 aa)) is disordered. A compositionally biased stretch (basic and acidic residues) spans 104–115 (TTSEKQKDKGEQ). Over residues 199-211 (RHKKDKSKPKVAT) the composition is skewed to basic residues. The region spanning 381 to 550 (ERPPVVTIMG…LIQAEVLELK (170 aa)) is the tr-type G domain. The tract at residues 390 to 397 (GHVDHGKT) is G1. 390-397 (GHVDHGKT) is a binding site for GTP. Positions 415-419 (GITQH) are G2. The segment at 436-439 (DTPG) is G3. Residues 436–440 (DTPGH) and 490–493 (NKMD) each bind GTP. The tract at residues 490 to 493 (NKMD) is G4. The segment at 526 to 528 (SAK) is G5.

It belongs to the TRAFAC class translation factor GTPase superfamily. Classic translation factor GTPase family. IF-2 subfamily.

Its subcellular location is the cytoplasm. One of the essential components for the initiation of protein synthesis. Protects formylmethionyl-tRNA from spontaneous hydrolysis and promotes its binding to the 30S ribosomal subunits. Also involved in the hydrolysis of GTP during the formation of the 70S ribosomal complex. The polypeptide is Translation initiation factor IF-2 (Helicobacter hepaticus (strain ATCC 51449 / 3B1)).